Consider the following 198-residue polypeptide: Recombination protein RecR (198 aa).

A C4-type zinc finger spans residues Cys-56–Cys-71. Residues Lys-79–Pro-174 form the Toprim domain.

The protein belongs to the RecR family.

Functionally, may play a role in DNA repair. It seems to be involved in an RecBC-independent recombinational process of DNA repair. It may act with RecF and RecO. The chain is Recombination protein RecR from Erythrobacter litoralis (strain HTCC2594).